The following is a 751-amino-acid chain: Catalase-peroxidase 2 (751 aa).

Positions 1-27 are cleaved as a signal peptide; the sequence is MFKKTVPLLSAVAIAISFSAGTGVANA. Positions 115 to 238 form a cross-link, tryptophyl-tyrosyl-methioninium (Trp-Tyr) (with M-264); sequence WHGAGTYRVQ…LAAVQMGLIY (124 aa). Catalysis depends on histidine 116, which acts as the Proton acceptor. Positions 238-264 form a cross-link, tryptophyl-tyrosyl-methioninium (Tyr-Met) (with W-115); the sequence is YVNPEGPNGKPDPLLAAKDIRDTFGRM. Histidine 279 provides a ligand contact to heme b.

The protein belongs to the peroxidase family. Peroxidase/catalase subfamily. As to quaternary structure, homodimer or homotetramer. The cofactor is heme b. Post-translationally, formation of the three residue Trp-Tyr-Met cross-link is important for the catalase, but not the peroxidase activity of the enzyme.

The enzyme catalyses H2O2 + AH2 = A + 2 H2O. It catalyses the reaction 2 H2O2 = O2 + 2 H2O. In terms of biological role, bifunctional enzyme with both catalase and broad-spectrum peroxidase activity. This Idiomarina loihiensis (strain ATCC BAA-735 / DSM 15497 / L2-TR) protein is Catalase-peroxidase 2.